The primary structure comprises 1139 residues: GRIP and coiled-coil domain-containing protein (1139 aa).

The tract at residues 366–388 (NDDSQINNNVSNKVNSPDDDPNT) is disordered. A compositionally biased stretch (polar residues) spans 369-380 (SQINNNVSNKVN). 2 coiled-coil regions span residues 472 to 648 (VTKL…INNE) and 758 to 877 (LYIL…ETQQ). Residues 1004-1024 (NEQENDNNNNNNNNNNNNNVE) form a disordered region. The segment covering 1009–1022 (DNNNNNNNNNNNNN) has biased composition (low complexity). Residues 1043-1084 (YKKIRKKLETYEILLNEQQEGKKKMTEEINSLKNQVKNYESI) adopt a coiled-coil conformation. In terms of domain architecture, GRIP spans 1084–1135 (INGNYQHIIYQKNILSNFIAQIPSRIQVDDYVSVIFNSFNFSNQEIEAINIK).

The protein is GRIP and coiled-coil domain-containing protein of Plasmodium falciparum (isolate 3D7).